The chain runs to 816 residues: Leucine--tRNA ligase (816 aa).

The short motif at 40–51 is the 'HIGH' region element; that stretch reads SYPSGSQLHAGH. Residues 576 to 580 carry the 'KMSKS' region motif; it reads KMSKS. ATP is bound at residue K579.

This sequence belongs to the class-I aminoacyl-tRNA synthetase family.

The protein resides in the cytoplasm. It catalyses the reaction tRNA(Leu) + L-leucine + ATP = L-leucyl-tRNA(Leu) + AMP + diphosphate. The sequence is that of Leucine--tRNA ligase from Clostridium perfringens (strain SM101 / Type A).